A 473-amino-acid polypeptide reads, in one-letter code: Cysteine--tRNA ligase (473 aa).

Zn(2+) is bound at residue C30. A 'HIGH' region motif is present at residues 32 to 42 (MTVYDYCHIGH). Residues C213, H238, and E242 each coordinate Zn(2+). Positions 270–274 (KMSKS) match the 'KMSKS' region motif. Residue K273 participates in ATP binding.

It belongs to the class-I aminoacyl-tRNA synthetase family. As to quaternary structure, monomer. Zn(2+) is required as a cofactor.

The protein localises to the cytoplasm. It catalyses the reaction tRNA(Cys) + L-cysteine + ATP = L-cysteinyl-tRNA(Cys) + AMP + diphosphate. This chain is Cysteine--tRNA ligase, found in Acinetobacter baumannii (strain ACICU).